The sequence spans 592 residues: Frizzled-9 (592 aa).

The first 23 residues, 1 to 23, serve as a signal peptide directing secretion; sequence MAVPPLLRGALLLWQLLATGGAA. Over 24-230 the chain is Extracellular; that stretch reads LEIGRFDPER…EVFWSRRDKD (207 aa). In terms of domain architecture, FZ spans 35-156; that stretch reads RGPAPCQAME…NDPHALCMEA (122 aa). 5 cysteine pairs are disulfide-bonded: C40–C101, C48–C94, C85–C123, C112–C153, and C116–C140. The interval 59-173 is required for Wnt-activated receptor activity; sequence PNLLGHTSQG…PTEPHKGLGM (115 aa). The chain crosses the membrane as a helical span at residues 231–251; sequence FALVWMAVWSALCFFSTAFTV. At 252-267 the chain is on the cytoplasmic side; it reads FTFLLEPHRFQYPERP. A helical transmembrane segment spans residues 268–288; it reads IIFLSMCYNVYSLAFLIRAVA. Residues 289–314 lie on the Extracellular side of the membrane; the sequence is GAQSVACDQEAGALYVIQEGLENTGC. Residues 315 to 335 traverse the membrane as a helical segment; that stretch reads TLVFLLLYYFGMASSLWWVVL. At 336–356 the chain is on the cytoplasmic side; that stretch reads TLTWFLAAGKKWGHEAIEAHG. Residues 357-377 form a helical membrane-spanning segment; it reads SYFHMAAWGLPALKTIVVLTL. The Extracellular portion of the chain corresponds to 378–401; it reads RKVAGDELTGLCYVASMDPAALTG. Residues 402–422 form a helical membrane-spanning segment; it reads FVLVPLSCYLVLGTSFLLTGF. Over 423–448 the chain is Cytoplasmic; that stretch reads VALFHIRKIMKTGGTNTEKLEKLMVK. The chain crosses the membrane as a helical span at residues 449–469; the sequence is IGVFSILYTVPATCVIVCYVY. Topologically, residues 470–509 are extracellular; it reads ERLNMDFWRLRATEQPCTAAAVPGGRRDCSLPGGSVPTVA. The helical transmembrane segment at 510 to 530 threads the bilayer; the sequence is VFMLKIFMSLVVGITSGVWVW. The Cytoplasmic portion of the chain corresponds to 531–592; the sequence is SSKTFQTWQS…DPSLENPTHL (62 aa). The Lys-Thr-X-X-X-Trp motif, mediates interaction with the PDZ domain of Dvl family members motif lies at 533–538; sequence KTFQTW. Positions 555–592 are required for CTNNB1 accumulation and TCF transcription factor activity; sequence ACRTPGGYGRGTHCHYKAPTVVLHMTKTDPSLENPTHL.

The protein belongs to the G-protein coupled receptor Fz/Smo family. Ubiquitinated by ZNRF3, leading to its degradation by the proteasome.

The protein localises to the cell membrane. Functionally, receptor for WNT2 that is coupled to the beta-catenin canonical signaling pathway, which leads to the activation of disheveled proteins, inhibition of GSK-3 kinase, nuclear accumulation of beta-catenin and activation of Wnt target genes. Plays a role in neuromuscular junction (NMJ) assembly by negatively regulating the clustering of acetylcholine receptors (AChR) through the beta-catenin canonical signaling pathway. May play a role in neural progenitor cells (NPCs) viability through the beta-catenin canonical signaling pathway by negatively regulating cell cycle arrest leading to inhibition of neuron apoptotic process. During hippocampal development, regulates neuroblast proliferation and apoptotic cell death. Controls bone formation through non canonical Wnt signaling mediated via ISG15. Positively regulates bone regeneration through non canonical Wnt signaling. The polypeptide is Frizzled-9 (Rattus norvegicus (Rat)).